Here is a 145-residue protein sequence, read N- to C-terminus: FAD synthase (145 aa).

Residues 5–6 (TF), 10–13 (HPGH), Asp-92, and Tyr-119 each bind ATP.

Belongs to the archaeal FAD synthase family. As to quaternary structure, homodimer. The cofactor is a divalent metal cation.

The catalysed reaction is FMN + ATP + H(+) = FAD + diphosphate. Its pathway is cofactor biosynthesis; FAD biosynthesis; FAD from FMN: step 1/1. Functionally, catalyzes the transfer of the AMP portion of ATP to flavin mononucleotide (FMN) to produce flavin adenine dinucleotide (FAD) coenzyme. This is FAD synthase from Methanothermus fervidus (strain ATCC 43054 / DSM 2088 / JCM 10308 / V24 S).